Here is a 355-residue protein sequence, read N- to C-terminus: 3-dehydroquinate synthase (355 aa).

NAD(+) is bound by residues 71–76 (EGEASK), 105–109 (GVVGD), 129–130 (TS), lysine 142, and lysine 151. Zn(2+)-binding residues include glutamate 184, histidine 246, and histidine 263.

It belongs to the sugar phosphate cyclases superfamily. Dehydroquinate synthase family. Co(2+) serves as cofactor. Zn(2+) is required as a cofactor. It depends on NAD(+) as a cofactor.

It localises to the cytoplasm. The catalysed reaction is 7-phospho-2-dehydro-3-deoxy-D-arabino-heptonate = 3-dehydroquinate + phosphate. It participates in metabolic intermediate biosynthesis; chorismate biosynthesis; chorismate from D-erythrose 4-phosphate and phosphoenolpyruvate: step 2/7. Functionally, catalyzes the conversion of 3-deoxy-D-arabino-heptulosonate 7-phosphate (DAHP) to dehydroquinate (DHQ). The polypeptide is 3-dehydroquinate synthase (Streptococcus thermophilus (strain CNRZ 1066)).